Consider the following 164-residue polypeptide: Ecotin (164 aa).

The N-terminal stretch at 1–20 (MKMFVPAVVFAALASASAWA) is a signal peptide. Cys-72 and Cys-109 are oxidised to a cystine.

It belongs to the protease inhibitor I11 (ecotin) family. As to quaternary structure, homodimer.

It is found in the periplasm. General inhibitor of pancreatic serine proteases: inhibits chymotrypsin, trypsin, elastases, factor X, kallikrein as well as a variety of other proteases. The protein is Ecotin of Salmonella paratyphi A (strain ATCC 9150 / SARB42).